Reading from the N-terminus, the 949-residue chain is Inactive atromentin synthetase invA3 (949 aa).

The adenylation (A) domain stretch occupies residues 38–460 (RAVSQYPNHE…SGRIKDTVVV (423 aa)). In terms of domain architecture, Carrier spans 592 to 670 (ALSTETEKTL…NLAKYVDSLV (79 aa)). Residues 597–667 (TEKTLAGIYA…VISNLAKYVD (71 aa)) form a thiolation and peptide carrier (T) domain region. An O-(pantetheine 4'-phosphoryl)serine modification is found at serine 629. The tract at residues 693-934 (PIFMVHPGMA…YTLMDFDHVA (242 aa)) is thioesterase (TE) domain.

This sequence belongs to the ATP-dependent AMP-binding enzyme family.

Inactive atromentin synthetase homolog. While the invA3 adenylation (A) domain is capable of adenylating 4-hydroxyphenylpyruvate (4-HPP), the invA3 enzyme is inactive because of its non-functional thioesterase (TE) domain. The chain is Inactive atromentin synthetase invA3 (invA3) from Paxillus involutus (Naked brimcap).